Consider the following 66-residue polypeptide: Large ribosomal subunit protein bL32 (66 aa).

Belongs to the bacterial ribosomal protein bL32 family.

The sequence is that of Large ribosomal subunit protein bL32 from Rickettsia canadensis (strain McKiel).